The primary structure comprises 99 residues: uncharacterized protein (99 aa).

The N-terminal stretch at 1-17 is a signal peptide; the sequence is MMMNSFFPAMALMVLVG. Cys-18 is lipidated: N-palmitoyl cysteine. The S-diacylglycerol cysteine moiety is linked to residue Cys-18.

It is found in the cell membrane. This is an uncharacterized protein from Escherichia coli O157:H7.